The following is a 137-amino-acid chain: 15.7 kDa heat shock protein, peroxisomal (137 aa).

The sHSP domain occupies 15-134 (QEWSRSTALI…SSKVRNVNIT (120 aa)). The short motif at 135-137 (SKL) is the Microbody targeting signal element.

Belongs to the small heat shock protein (HSP20) family. In terms of assembly, may form oligomeric structures.

The protein localises to the peroxisome. In terms of biological role, possesses chaperone activity. The polypeptide is 15.7 kDa heat shock protein, peroxisomal (HSP15.7) (Arabidopsis thaliana (Mouse-ear cress)).